The primary structure comprises 289 residues: ATP synthase gamma chain (289 aa).

Belongs to the ATPase gamma chain family. F-type ATPases have 2 components, CF(1) - the catalytic core - and CF(0) - the membrane proton channel. CF(1) has five subunits: alpha(3), beta(3), gamma(1), delta(1), epsilon(1). CF(0) has three main subunits: a, b and c.

The protein resides in the cell inner membrane. Produces ATP from ADP in the presence of a proton gradient across the membrane. The gamma chain is believed to be important in regulating ATPase activity and the flow of protons through the CF(0) complex. This Acinetobacter baylyi (strain ATCC 33305 / BD413 / ADP1) protein is ATP synthase gamma chain.